The chain runs to 140 residues: Large ribosomal subunit protein uL11 (140 aa).

Belongs to the universal ribosomal protein uL11 family. Part of the ribosomal stalk of the 50S ribosomal subunit. Interacts with L10 and the large rRNA to form the base of the stalk. L10 forms an elongated spine to which L12 dimers bind in a sequential fashion forming a multimeric L10(L12)X complex. One or more lysine residues are methylated.

In terms of biological role, forms part of the ribosomal stalk which helps the ribosome interact with GTP-bound translation factors. This Thermoanaerobacter pseudethanolicus (strain ATCC 33223 / 39E) (Clostridium thermohydrosulfuricum) protein is Large ribosomal subunit protein uL11.